The chain runs to 405 residues: Terpene cyclase pbrA (405 aa).

The Mg(2+) site is built by Asp-103, Glu-168, Asn-229, Ser-233, Glu-237, and Asp-241. Residues 103 to 108 (DDEISS) carry the D(D/E)XX(D/E) motif motif. An NSE motif motif is present at residues 227–237 (LVNDLFSFYKE). The WxxxxxRY motif signature appears at 316–323 (EDLGGSSA).

This sequence belongs to the trichodiene synthase family. Mg(2+) is required as a cofactor.

It participates in secondary metabolite biosynthesis; terpenoid biosynthesis. Its function is as follows. Terpene cyclase; part of the gene cluster that mediates the biosynthesis of the sesquiterpenoid aspterric acid (AA), an inhibitor of dihydroxy-acid dehydratase (DHAD) effective as an herbicide. PbrA cyclizes farnesyl diphosphate (FPP) to produce (-)-daucane. The cytochrome P450 monooxygenase pbrBB then converts (-)-daucane into the alpha-epoxy carboxylate intermediate which is further converted into the tricyclic aspterric acid by the cytochrome P450 monooxygenase pbrC. This Penicillium brasilianum protein is Terpene cyclase pbrA.